A 156-amino-acid polypeptide reads, in one-letter code: Small ribosomal subunit protein uS7 (156 aa).

This sequence belongs to the universal ribosomal protein uS7 family. In terms of assembly, part of the 30S ribosomal subunit. Contacts proteins S9 and S11.

In terms of biological role, one of the primary rRNA binding proteins, it binds directly to 16S rRNA where it nucleates assembly of the head domain of the 30S subunit. Is located at the subunit interface close to the decoding center, probably blocks exit of the E-site tRNA. The chain is Small ribosomal subunit protein uS7 from Photobacterium profundum (strain SS9).